Consider the following 225-residue polypeptide: Holliday junction branch migration complex subunit RuvA (225 aa).

A domain I region spans residues 1–71; the sequence is MISWINGELV…EDSDLLFGFT (71 aa). The domain II stretch occupies residues 72 to 150; that stretch reads SKDQKFFFIE…SKIQIEEEKG (79 aa). A flexible linker region spans residues 151 to 161; sequence QEEFEITNPEI. A domain III region spans residues 161-225; the sequence is IYKLMEDLQL…LDQGNSNLAR (65 aa).

Belongs to the RuvA family. In terms of assembly, homotetramer. Forms an RuvA(8)-RuvB(12)-Holliday junction (HJ) complex. HJ DNA is sandwiched between 2 RuvA tetramers; dsDNA enters through RuvA and exits via RuvB. An RuvB hexamer assembles on each DNA strand where it exits the tetramer. Each RuvB hexamer is contacted by two RuvA subunits (via domain III) on 2 adjacent RuvB subunits; this complex drives branch migration. In the full resolvosome a probable DNA-RuvA(4)-RuvB(12)-RuvC(2) complex forms which resolves the HJ.

The protein resides in the cytoplasm. Its function is as follows. The RuvA-RuvB-RuvC complex processes Holliday junction (HJ) DNA during genetic recombination and DNA repair, while the RuvA-RuvB complex plays an important role in the rescue of blocked DNA replication forks via replication fork reversal (RFR). RuvA specifically binds to HJ cruciform DNA, conferring on it an open structure. The RuvB hexamer acts as an ATP-dependent pump, pulling dsDNA into and through the RuvAB complex. HJ branch migration allows RuvC to scan DNA until it finds its consensus sequence, where it cleaves and resolves the cruciform DNA. This chain is Holliday junction branch migration complex subunit RuvA, found in Prochlorococcus marinus (strain MIT 9215).